Here is a 245-residue protein sequence, read N- to C-terminus: Orotidine 5'-phosphate decarboxylase (245 aa).

Substrate contacts are provided by residues D22, K44, 71 to 80 (DLKFHDIPNT), T131, R192, Q201, G221, and R222. K73 (proton donor) is an active-site residue.

This sequence belongs to the OMP decarboxylase family. Type 1 subfamily. In terms of assembly, homodimer.

It catalyses the reaction orotidine 5'-phosphate + H(+) = UMP + CO2. It functions in the pathway pyrimidine metabolism; UMP biosynthesis via de novo pathway; UMP from orotate: step 2/2. Its function is as follows. Catalyzes the decarboxylation of orotidine 5'-monophosphate (OMP) to uridine 5'-monophosphate (UMP). This chain is Orotidine 5'-phosphate decarboxylase, found in Salmonella paratyphi A (strain ATCC 9150 / SARB42).